The sequence spans 421 residues: Ribulose bisphosphate carboxylase large chain (421 aa).

Residues asparagine 68 and threonine 118 each coordinate substrate. Lysine 120 acts as the Proton acceptor in catalysis. Substrate is bound at residue lysine 122. Positions 146, 148, and 149 each coordinate Mg(2+). Lysine 146 is subject to N6-carboxylysine. Histidine 239 serves as the catalytic Proton acceptor. Arginine 240, histidine 272, and serine 324 together coordinate substrate.

Belongs to the RuBisCO large chain family. Type I subfamily. As to quaternary structure, heterohexadecamer of 8 large chains and 8 small chains; disulfide-linked. The disulfide link is formed within the large subunit homodimers. It depends on Mg(2+) as a cofactor. The disulfide bond which can form in the large chain dimeric partners within the hexadecamer appears to be associated with oxidative stress and protein turnover.

It localises to the plastid. The protein resides in the chloroplast. It catalyses the reaction 2 (2R)-3-phosphoglycerate + 2 H(+) = D-ribulose 1,5-bisphosphate + CO2 + H2O. The enzyme catalyses D-ribulose 1,5-bisphosphate + O2 = 2-phosphoglycolate + (2R)-3-phosphoglycerate + 2 H(+). Functionally, ruBisCO catalyzes two reactions: the carboxylation of D-ribulose 1,5-bisphosphate, the primary event in carbon dioxide fixation, as well as the oxidative fragmentation of the pentose substrate in the photorespiration process. Both reactions occur simultaneously and in competition at the same active site. This Aegilops tauschii (Tausch's goatgrass) protein is Ribulose bisphosphate carboxylase large chain (rbcL).